Here is a 167-residue protein sequence, read N- to C-terminus: Zymogen granule membrane protein 16 (167 aa).

The signal sequence occupies residues 1 to 16 (MLAIALLVLLCASASA). In terms of domain architecture, Jacalin-type lectin spans 24–159 (SSYSGEYGGK…IDAISLHWDT (136 aa)).

It belongs to the jacalin lectin family. In terms of tissue distribution, expressed in pancreas, colon, duodenum, and much less in stomach.

It localises to the secreted. It is found in the extracellular space. The protein localises to the extracellular matrix. Its subcellular location is the zymogen granule lumen. The protein resides in the golgi apparatus lumen. May play a role in protein trafficking. May act as a linker molecule between the submembranous matrix on the luminal side of zymogen granule membrane (ZGM) and aggregated secretory proteins during granule formation in the TGN. The protein is Zymogen granule membrane protein 16 (Zg16) of Rattus norvegicus (Rat).